The sequence spans 201 residues: Natural cytotoxicity triggering receptor 3 (201 aa).

The first 18 residues, M1–A18, serve as a signal peptide directing secretion. Positions L19–V126 constitute an Ig-like domain. Residues L19–G135 are Extracellular-facing. C39 and C108 are joined by a disulfide. Residues N42 and N121 are each glycosylated (N-linked (GlcNAc...) asparagine). The helical transmembrane segment at A136–V156 threads the bilayer. The Cytoplasmic portion of the chain corresponds to G157–G201.

It belongs to the natural cytotoxicity receptor (NCR) family. Homodimer in the unliganted form. Interacts with CD3Z. Interacts with and is activated by binding to NCR3LG1. Interacts with and is activated by binding to BAG6. Interacts with and is inhibited by binding to LGALS3.

The protein localises to the cell membrane. Functionally, cell membrane receptor of natural killer/NK cells that is activated by binding of extracellular ligands including BAG6 and NCR3LG1. Stimulates NK cells cytotoxicity toward neighboring cells producing these ligands. It controls, for instance, NK cells cytotoxicity against tumor cells. Engagement of NCR3 by BAG6 also promotes myeloid dendritic cells (DC) maturation, both through killing DCs that did not acquire a mature phenotype, and inducing the release by NK cells of TNFA and IFNG that promote DC maturation. This chain is Natural cytotoxicity triggering receptor 3 (NCR3), found in Pan troglodytes (Chimpanzee).